Consider the following 305-residue polypeptide: Glycine--tRNA ligase alpha subunit (305 aa).

It belongs to the class-II aminoacyl-tRNA synthetase family. As to quaternary structure, tetramer of two alpha and two beta subunits.

It localises to the cytoplasm. The catalysed reaction is tRNA(Gly) + glycine + ATP = glycyl-tRNA(Gly) + AMP + diphosphate. The chain is Glycine--tRNA ligase alpha subunit from Heliobacterium modesticaldum (strain ATCC 51547 / Ice1).